A 436-amino-acid polypeptide reads, in one-letter code: GTPase Der (436 aa).

2 EngA-type G domains span residues 4 to 167 (PIVA…KEEE) and 176 to 351 (IRLS…ENHK). GTP contacts are provided by residues 10 to 17 (GRPNVGKS), 57 to 61 (DTGGI), 119 to 122 (NKVD), 182 to 189 (GRPNVGKS), 229 to 233 (DTAGM), and 294 to 297 (NKWD). Residues 352–436 (KRVQSSTLNE…PVHIIARKRN (85 aa)) enclose the KH-like domain.

Belongs to the TRAFAC class TrmE-Era-EngA-EngB-Septin-like GTPase superfamily. EngA (Der) GTPase family. In terms of assembly, associates with the 50S ribosomal subunit.

GTPase that plays an essential role in the late steps of ribosome biogenesis. In Staphylococcus saprophyticus subsp. saprophyticus (strain ATCC 15305 / DSM 20229 / NCIMB 8711 / NCTC 7292 / S-41), this protein is GTPase Der.